Consider the following 101-residue polypeptide: MDLEKQVDREENQDDLHFILLLLILLIRQSSSEGNPSDLRRQLVFAKELGVPVSKVNLINGDTLQNVIVKEVLTDLVIFQNPLNNTRSHVSLSSVVSWGAF.

May be involved in maturation of the outermost layer of the spore. This chain is Protein CgeC (cgeC), found in Bacillus subtilis (strain 168).